The sequence spans 377 residues: Nucleoside diphosphate kinase homolog 7 (377 aa).

Positions 3–91 constitute a DM10 domain; sequence HSERFVFIAE…YTARQLGSKK (89 aa).

It belongs to the NDK family. As to quaternary structure, component of sperm flagellar doublet microtubules. Component of the gamma-tubulin ring complex. As to expression, expressed in trachea multiciliated cells.

Its subcellular location is the cytoplasm. It is found in the cytoskeleton. It localises to the microtubule organizing center. The protein resides in the centrosome. The protein localises to the nucleus. Its subcellular location is the spindle. It is found in the cilium axoneme. It localises to the flagellum axoneme. The protein resides in the cell projection. The protein localises to the cilium. Possesses an intrinsic kinase activity. Displays 3'-5' exonuclease activity with a preference for single-stranded DNA. Does not seem to have nucleoside diphosphate kinase activity. Functional component of the gamma-tubulin ring complex, implicated in the regulation of the microtubule-nucleating activity of the gamma-tubulin ring complex in centrosomes, in a kinase activity-dependent manner. Part of the dynein-decorated doublet microtubules (DMTs) in cilia axoneme, which is required for motile cilia beating. The polypeptide is Nucleoside diphosphate kinase homolog 7 (NME7) (Bos taurus (Bovine)).